The following is a 517-amino-acid chain: MELEELGIREECGVFGCIASGDWPTQLDVPHVITLGLVGLQHRGQESAGIVTSDGSAVPKFRVHKGMGLVNHVFTEDNLKKLYDSNLGIGHTRYATTGKCELENCQPFVVETLHGKIAVAHNGELVNAARLRKKLLRQGIGLSTSSDSEMITQLLAYTPPQEKDDAPDWVARIKNLMKEAPAAYSLVIMHRDFIYAVRDPYGNRPLCIGRLMPVSDVNDKEKKSSETEGWVVSSESCSFLSIGARYCHEVKPGEIVEISRHGIRTLDIIPRSNGDPVAFCIFEYVYFARPDSMFEDQMVYTVRYRCGQQLAIEAPVEADLVSTVPESATPAALGYATKCGLPYVEVLCKNRYVGRTFIQPNMRLRQLGVAKKFGVLSDNFKGKRIVLIDDSIVRGNTISPIIKLLKESGAKEVHIRVASPPIKYPCFMGINIPTKEELIANKPEFDCLAEYLGANSVVYLSVEGLVSSVQQEIKFKKQKVKKHDIAIQENGNGLEYFEKTGHCTACLTGQYPVELEW.

Met-1 carries the N-acetylmethionine modification. Positions 1 to 11 are excised as a propeptide; the sequence is MELEELGIREE. The active-site Nucleophile is the Cys-12. Positions 12-261 constitute a Glutamine amidotransferase type-2 domain; it reads CGVFGCIASG…PGEIVEISRH (250 aa). Cys-280 serves as a coordination point for [4Fe-4S] cluster. Residues Ser-327, Asp-389, and Asp-390 each coordinate Mg(2+). Residues Cys-426, Cys-503, and Cys-506 each coordinate [4Fe-4S] cluster.

In the C-terminal section; belongs to the purine/pyrimidine phosphoribosyltransferase family. Homotetramer. Mg(2+) is required as a cofactor. Requires [4Fe-4S] cluster as cofactor.

The catalysed reaction is 5-phospho-beta-D-ribosylamine + L-glutamate + diphosphate = 5-phospho-alpha-D-ribose 1-diphosphate + L-glutamine + H2O. It participates in purine metabolism; IMP biosynthesis via de novo pathway; N(1)-(5-phospho-D-ribosyl)glycinamide from 5-phospho-alpha-D-ribose 1-diphosphate: step 1/2. Its function is as follows. Catalyzes the formation of phosphoribosylamine from phosphoribosylpyrophosphate (PRPP) and glutamine. The protein is Amidophosphoribosyltransferase of Mus musculus (Mouse).